The primary structure comprises 158 residues: uncharacterized protein (158 aa).

This is an uncharacterized protein from Aedes vexans (Inland floodwater mosquito).